A 310-amino-acid polypeptide reads, in one-letter code: ADP-L-glycero-D-manno-heptose-6-epimerase (310 aa).

NADP(+)-binding positions include 10 to 11 (FI), 31 to 32 (DN), K38, K53, 75 to 79 (EGACS), and N92. Y140 functions as the Proton acceptor in the catalytic mechanism. K144 is an NADP(+) binding site. N169 lines the substrate pocket. Residues V170 and K178 each contribute to the NADP(+) site. The active-site Proton acceptor is the K178. Residues S180, H187, 201–204 (FEGS), R209, and Y272 contribute to the substrate site.

Belongs to the NAD(P)-dependent epimerase/dehydratase family. HldD subfamily. As to quaternary structure, homopentamer. NADP(+) serves as cofactor.

The enzyme catalyses ADP-D-glycero-beta-D-manno-heptose = ADP-L-glycero-beta-D-manno-heptose. The protein operates within nucleotide-sugar biosynthesis; ADP-L-glycero-beta-D-manno-heptose biosynthesis; ADP-L-glycero-beta-D-manno-heptose from D-glycero-beta-D-manno-heptose 7-phosphate: step 4/4. In terms of biological role, catalyzes the interconversion between ADP-D-glycero-beta-D-manno-heptose and ADP-L-glycero-beta-D-manno-heptose via an epimerization at carbon 6 of the heptose. The protein is ADP-L-glycero-D-manno-heptose-6-epimerase of Klebsiella pneumoniae (strain 342).